A 487-amino-acid polypeptide reads, in one-letter code: Serine/threonine-protein kinase 4 (487 aa).

An N-acetylmethionine modification is found at Met1. Thr3 carries the post-translational modification Phosphothreonine. The Protein kinase domain maps to 30-281 (FDVLEKLGEG…ATQLLQHPFV (252 aa)). Residues 36 to 44 (LGEGSYGSV) and Lys59 each bind ATP. Catalysis depends on Asp149, which acts as the Proton acceptor. Thr183 carries the phosphothreonine; by autocatalysis modification. Ser265 and Ser320 each carry phosphoserine. The stretch at 289-327 (ILRDLINEAMDVKLKRQEAQQREVDQEEEENSEEDELDS) forms a coiled coil. A disordered region spans residues 305–332 (QEAQQREVDQEEEENSEEDELDSGTMVR). Acidic residues predominate over residues 313 to 326 (DQEEEENSEEDELD). Residues Thr340 and Thr367 each carry the phosphothreonine modification. Thr387 bears the Phosphothreonine; by PKB/AKT1 mark. Residues Ser410 and Ser414 each carry the phosphoserine modification. At Tyr433 the chain carries Phosphotyrosine. Residues 433–480 (YEFLKSWTVEDLQKRLLALDPMMEQEIEEIRQKYQSKRQPILDAIEAK) enclose the SARAH domain.

The protein belongs to the protein kinase superfamily. STE Ser/Thr protein kinase family. STE20 subfamily. Homodimer; mediated via the coiled-coil region. Interacts with NORE1, which inhibits autoactivation. Interacts with and stabilizes SAV1. Interacts with RASSF1. Interacts with FOXO3. Interacts with RASSF2 (via SARAH domain). Interacts with AR, PKB/AKT1, TNNI3 and SIRT1. Interacts with DLG5 (via PDZ domain 3). Interacts with MARK3 and SCRIB in the presence of DLG5. The cofactor is Mg(2+). Post-translationally, autophosphorylated on serine and threonine residues. Phosphorylation at Thr-387 by PKB/AKT1, leads to inhibition of its: kinase activity, nuclear translocation and autophosphorylation at Thr-183. It also diminishes its cleavage by caspases and its ability to phosphorylate FOXO3. Proteolytically cleaved by caspase-3 during apoptosis at Asp-326 and Asp-349 resulting in a 37 kDa or a 39 kDa subunit respectively. The 39 kDa subunit is further cleaved into the 37 kDa form. Proteolytic cleavage results in kinase activation and nuclear translocation of the truncated form (MST1/N). It is less likely that cleavage at Asp-349 is a prerequisite for activation as this site is not conserved in the murine ortholog.

The protein localises to the cytoplasm. The protein resides in the nucleus. It carries out the reaction L-seryl-[protein] + ATP = O-phospho-L-seryl-[protein] + ADP + H(+). It catalyses the reaction L-threonyl-[protein] + ATP = O-phospho-L-threonyl-[protein] + ADP + H(+). Inhibited by the C-terminal non-catalytic region. Activated by caspase-cleavage. Full activation also requires homodimerization and autophosphorylation of Thr-183. Activated by RASSF1 which acts by preventing its dephosphorylation. Functionally, stress-activated, pro-apoptotic kinase which, following caspase-cleavage, enters the nucleus and induces chromatin condensation followed by internucleosomal DNA fragmentation. Key component of the Hippo signaling pathway which plays a pivotal role in organ size control and tumor suppression by restricting proliferation and promoting apoptosis. The core of this pathway is composed of a kinase cascade wherein STK3/MST2 and STK4/MST1, in complex with its regulatory protein SAV1, phosphorylates and activates LATS1/2 in complex with its regulatory protein MOB1, which in turn phosphorylates and inactivates YAP1 oncoprotein and WWTR1/TAZ. Phosphorylation of YAP1 by LATS2 inhibits its translocation into the nucleus to regulate cellular genes important for cell proliferation, cell death, and cell migration. STK3/MST2 and STK4/MST1 are required to repress proliferation of mature hepatocytes, to prevent activation of facultative adult liver stem cells (oval cells), and to inhibit tumor formation. Phosphorylates 'Ser-14' of histone H2B (H2BS14ph) during apoptosis. Phosphorylates FOXO3 upon oxidative stress, which results in its nuclear translocation and cell death initiation. Phosphorylates MOBKL1A, MOBKL1B and RASSF2. Phosphorylates TNNI3 (cardiac Tn-I) and alters its binding affinity to TNNC1 (cardiac Tn-C) and TNNT2 (cardiac Tn-T). Phosphorylates FOXO1 on 'Ser-212' and regulates its activation and stimulates transcription of PMAIP1 in a FOXO1-dependent manner. Phosphorylates SIRT1 and inhibits SIRT1-mediated p53/TP53 deacetylation, thereby promoting p53/TP53 dependent transcription and apoptosis upon DNA damage. Acts as an inhibitor of PKB/AKT1. Phosphorylates AR on 'Ser-650' and suppresses its activity by intersecting with PKB/AKT1 signaling and antagonizing formation of AR-chromatin complexes. This Bos taurus (Bovine) protein is Serine/threonine-protein kinase 4 (STK4).